We begin with the raw amino-acid sequence, 216 residues long: Probable GTP-binding protein EngB (216 aa).

The EngB-type G domain occupies 24-205 (QTPELAFVGR…WARIASAATD (182 aa)). Residues 32–39 (GRSNVGKS), 59–63 (GRTRA), 86–89 (DLPG), 153–156 (TKMD), and 184–186 (FSA) contribute to the GTP site. 2 residues coordinate Mg(2+): Ser39 and Thr61.

It belongs to the TRAFAC class TrmE-Era-EngA-EngB-Septin-like GTPase superfamily. EngB GTPase family. Mg(2+) serves as cofactor.

Its function is as follows. Necessary for normal cell division and for the maintenance of normal septation. The chain is Probable GTP-binding protein EngB from Anaeromyxobacter sp. (strain Fw109-5).